The primary structure comprises 20 residues: Apidaecin 2+ (20 aa).

The span at 1–13 (GKPNKPRPAPIKP) shows a compositional bias: pro residues. The disordered stretch occupies residues 1–20 (GKPNKPRPAPIKPRPPHPRL).

Its subcellular location is the secreted. Its function is as follows. Antimicrobial peptide active against many Gram-negative enterobacterial and plant-associated bacterial species. Not active against other bacterial species like H.pylori, P.mirabilis, B.pertussis or N.gonorrhoeae. The sequence is that of Apidaecin 2+ from Pimpla disparis (Parasitic wasp).